The primary structure comprises 469 residues: Protein apterous (469 aa).

Disordered regions lie at residues 21–44 and 111–141; these read GPGA…CGSA and EVSD…DSKI. LIM zinc-binding domains are found at residues 148 to 200 and 210 to 263; these read CSGC…CKND and CSRC…CRTH. A DNA-binding region (homeobox) is located at residues 367 to 426; that stretch reads TKRMRTSFKHHQLRTMKSYFAINHNPDAKDLKQLSQKTGLPKRVLQVWFQNARAKWRRMM.

In terms of tissue distribution, expressed in PNS and CNS.

It is found in the nucleus. Required for the normal development of the wing and halter imaginal disks. In Drosophila melanogaster (Fruit fly), this protein is Protein apterous (ap).